The following is a 71-amino-acid chain: Putative membrane protein insertion efficiency factor (71 aa).

The protein belongs to the UPF0161 family.

It is found in the cell membrane. Its function is as follows. Could be involved in insertion of integral membrane proteins into the membrane. The chain is Putative membrane protein insertion efficiency factor from Ruminiclostridium cellulolyticum (strain ATCC 35319 / DSM 5812 / JCM 6584 / H10) (Clostridium cellulolyticum).